A 172-amino-acid polypeptide reads, in one-letter code: Ferritin-2 heavy chain (172 aa).

One can recognise a Ferritin-like diiron domain in the interval Q8–G157. Fe cation is bound by residues E25, E60, H63, E105, and Q139.

It belongs to the ferritin family. As to quaternary structure, oligomer of 24 subunits. The functional molecule forms a roughly spherical shell with a diameter of 12 nm and contains a central cavity into which the insoluble mineral iron core is deposited.

The catalysed reaction is 4 Fe(2+) + O2 + 4 H(+) = 4 Fe(3+) + 2 H2O. Its function is as follows. Stores iron in a soluble, non-toxic, readily available form. Important for iron homeostasis. Has ferroxidase activity. Iron is taken up in the ferrous form and deposited as ferric hydroxides after oxidation. The polypeptide is Ferritin-2 heavy chain (SCM-2) (Schistosoma mansoni (Blood fluke)).